The chain runs to 24 residues: Formate ester dehydrogenase gamma chain (24 aa).

In terms of assembly, heterotrimer composed of an alpha, a beta and a gamma chain.

This Amycolatopsis methanolica protein is Formate ester dehydrogenase gamma chain.